Here is a 211-residue protein sequence, read N- to C-terminus: Protein-L-isoaspartate O-methyltransferase (211 aa).

Residue S62 is part of the active site.

It belongs to the methyltransferase superfamily. L-isoaspartyl/D-aspartyl protein methyltransferase family.

It is found in the cytoplasm. It carries out the reaction [protein]-L-isoaspartate + S-adenosyl-L-methionine = [protein]-L-isoaspartate alpha-methyl ester + S-adenosyl-L-homocysteine. Functionally, catalyzes the methyl esterification of L-isoaspartyl residues in peptides and proteins that result from spontaneous decomposition of normal L-aspartyl and L-asparaginyl residues. It plays a role in the repair and/or degradation of damaged proteins. The polypeptide is Protein-L-isoaspartate O-methyltransferase (Shewanella baltica (strain OS195)).